The chain runs to 609 residues: UvrABC system protein C (609 aa).

The GIY-YIG domain occupies 22-100 (EKPGVYQYLN…IKKYKPRYNV (79 aa)). The 36-residue stretch at 214–249 (QDISRMLVEKMQELANEMKFEEAQKIKEKYLLIENY) folds into the UVR domain.

This sequence belongs to the UvrC family. In terms of assembly, interacts with UvrB in an incision complex.

Its subcellular location is the cytoplasm. In terms of biological role, the UvrABC repair system catalyzes the recognition and processing of DNA lesions. UvrC both incises the 5' and 3' sides of the lesion. The N-terminal half is responsible for the 3' incision and the C-terminal half is responsible for the 5' incision. This chain is UvrABC system protein C, found in Bacteroides thetaiotaomicron (strain ATCC 29148 / DSM 2079 / JCM 5827 / CCUG 10774 / NCTC 10582 / VPI-5482 / E50).